The primary structure comprises 521 residues: Glutamate--tRNA ligase (521 aa).

The 'HIGH' region motif lies at 13-23 (PSPSGFLHVGG). A 'KMSKS' region motif is present at residues 253 to 257 (KLSKR). Lys-256 is an ATP binding site.

Belongs to the class-I aminoacyl-tRNA synthetase family. Glutamate--tRNA ligase type 1 subfamily. As to quaternary structure, monomer.

The protein localises to the cytoplasm. The enzyme catalyses tRNA(Glu) + L-glutamate + ATP = L-glutamyl-tRNA(Glu) + AMP + diphosphate. Functionally, catalyzes the attachment of glutamate to tRNA(Glu) in a two-step reaction: glutamate is first activated by ATP to form Glu-AMP and then transferred to the acceptor end of tRNA(Glu). This chain is Glutamate--tRNA ligase, found in Leptospira interrogans serogroup Icterohaemorrhagiae serovar copenhageni (strain Fiocruz L1-130).